Reading from the N-terminus, the 61-residue chain is MEKFIELSLKEVTAITGGKYYGNGVHCGKHSCTVDWGTAIGNIGNNAAANWATGGNAGWNK.

The propeptide occupies 1 to 18; that stretch reads MEKFIELSLKEVTAITGG. The cysteines at positions 27 and 32 are disulfide-linked.

The protein belongs to the bacteriocin class IIA/YGNGV family.

The protein resides in the secreted. Functionally, bactericidal activity; inhibits closely related Lactobacilli, Listeria monocytogenes and ivanovvi, Enterococcus faecalis, Carnobacterium sp and Brocothrix thermosphacta. The polypeptide is Bacteriocin sakacin-P (sakP) (Latilactobacillus sakei (Lactobacillus sakei)).